We begin with the raw amino-acid sequence, 193 residues long: CASP-like protein 2U1 (193 aa).

Over 1-18 the chain is Cytoplasmic; it reads MAMALALGGGQDAERKVK. The chain crosses the membrane as a helical span at residues 19-39; it reads VAEVALRALLCGLGALAAALV. Over 40–61 the chain is Extracellular; that stretch reads ATDTQTRTFFSLQKKASYTDMK. The helical transmembrane segment at 62 to 82 threads the bilayer; it reads AMVFLVDAAAVAAGYSLLQLA. Topologically, residues 83 to 113 are cytoplasmic; the sequence is ARCCGGGAMSSGRGDGGGRGRALSWCVFSCD. A helical transmembrane segment spans residues 114-134; it reads QALAYVLLAAVAAALQASVVA. Residues 135 to 156 lie on the Extracellular side of the membrane; sequence KRGQPELQWMGICALYGAFCRQ. A helical membrane pass occupies residues 157–177; that stretch reads AGAGLATAVVAGLAAVLLAFL. At 178-193 the chain is on the cytoplasmic side; that stretch reads SAFNLFRLYGSGGTKS.

Belongs to the Casparian strip membrane proteins (CASP) family. Homodimer and heterodimers.

The protein localises to the cell membrane. The chain is CASP-like protein 2U1 from Sorghum bicolor (Sorghum).